The chain runs to 370 residues: Cobalt-precorrin-5B C(1)-methyltransferase (370 aa).

Belongs to the CbiD family.

It carries out the reaction Co-precorrin-5B + S-adenosyl-L-methionine = Co-precorrin-6A + S-adenosyl-L-homocysteine. It functions in the pathway cofactor biosynthesis; adenosylcobalamin biosynthesis; cob(II)yrinate a,c-diamide from sirohydrochlorin (anaerobic route): step 6/10. Functionally, catalyzes the methylation of C-1 in cobalt-precorrin-5B to form cobalt-precorrin-6A. The chain is Cobalt-precorrin-5B C(1)-methyltransferase from Pseudomonas syringae pv. tomato (strain ATCC BAA-871 / DC3000).